A 209-amino-acid chain; its full sequence is Thymidylate kinase (209 aa).

10–17 (GLEGAGKS) contributes to the ATP binding site.

This sequence belongs to the thymidylate kinase family.

It catalyses the reaction dTMP + ATP = dTDP + ADP. Phosphorylation of dTMP to form dTDP in both de novo and salvage pathways of dTTP synthesis. The sequence is that of Thymidylate kinase from Photobacterium profundum (strain SS9).